Here is a 225-residue protein sequence, read N- to C-terminus: Elongation factor 1-beta (225 aa).

The GST C-terminal domain maps to 2–84 (GFGDLKSPAG…ALGKYGPADV (83 aa)). N6-acetyllysine is present on Lys-7. Phosphoserine occurs at positions 8 and 42. A disordered region spans residues 78–115 (KYGPADVEDTTGSGATDSKDDDDIDLFGSDDEEESEEA). Phosphothreonine occurs at positions 88 and 93. Phosphoserine is present on residues Ser-95 and Ser-106. The segment covering 96-113 (KDDDDIDLFGSDDEEESE) has biased composition (acidic residues). Lys-147 participates in a covalent cross-link: Glycyl lysine isopeptide (Lys-Gly) (interchain with G-Cter in SUMO2). Ser-174 carries the phosphoserine modification.

It belongs to the EF-1-beta/EF-1-delta family. In terms of assembly, EF-1 is composed of 4 subunits: alpha, beta (alpha subunit of the eEF1B subcomplex), delta (beta subunit of the eEF1B subcomplex), and gamma (gamma subunit of the eEF1B subcomplex). Interacts with elongation factor EEF1A1. Phosphorylation affects the GDP/GTP exchange rate.

Catalytic subunit of the guanine nucleotide exchange factor (GEF) (eEF1B subcomplex) of the eukaryotic elongation factor 1 complex (eEF1). Stimulates the exchange of GDP for GTP on elongation factor 1A (eEF1A), probably by displacing GDP from the nucleotide binding pocket in eEF1A. This is Elongation factor 1-beta (EEF1B2) from Homo sapiens (Human).